A 302-amino-acid polypeptide reads, in one-letter code: N-acetylmuramic acid 6-phosphate etherase (302 aa).

Residues 58 to 221 (IFERFKKGGR…TTTLMIKLGK (164 aa)) enclose the SIS domain. The Proton donor role is filled by glutamate 86. Residue glutamate 117 is part of the active site.

Belongs to the GCKR-like family. MurNAc-6-P etherase subfamily. As to quaternary structure, homodimer.

The enzyme catalyses N-acetyl-D-muramate 6-phosphate + H2O = N-acetyl-D-glucosamine 6-phosphate + (R)-lactate. It participates in amino-sugar metabolism; N-acetylmuramate degradation. Its function is as follows. Specifically catalyzes the cleavage of the D-lactyl ether substituent of MurNAc 6-phosphate, producing GlcNAc 6-phosphate and D-lactate. In Mycoplasma mycoides subsp. mycoides SC (strain CCUG 32753 / NCTC 10114 / PG1), this protein is N-acetylmuramic acid 6-phosphate etherase.